The chain runs to 654 residues: Pyoverdine export ATP-binding/permease protein PvdT (654 aa).

An ABC transporter domain is found at 6–245; that stretch reads IELCDIRKAY…QPEQLQANDL (240 aa). An ATP-binding site is contributed by 43-50; that stretch reads GASGSGKS. 4 helical membrane passes run 282 to 302, 529 to 549, 596 to 616, and 617 to 637; these read ALTLLGIIIGVASVVVMLAVG, LSLMLGAIAAISLLVGGIGVM, IVIALLVGGGLLLADIAVAFA, and LPAILGAFACAVITGVVFGFM.

The protein belongs to the ABC transporter superfamily. Macrolide exporter (TC 3.A.1.122) family. Part of the tripartite efflux system PvdRT-OpmQ, which is composed of an inner membrane component with both ATPase and permease domains, PvdT, a periplasmic membrane fusion protein, PvdR, and an outer membrane component, OpmQ.

It localises to the cell inner membrane. In terms of biological role, part of the tripartite efflux system PvdRT-OpmQ required for the secretion into the extracellular milieu of the siderophore pyoverdine (PVD), which is involved in iron acquisition. This subunit binds PVD and drives its secretion by hydrolyzing ATP. The system is responsible for export of newly synthesized PVD after the final steps of biosynthesis have taken place in the periplasm. It is also responsible for recycling of PVD after internalization of ferri-PVD into the periplasm by the outer-membrane receptor FpvA and release of iron from PVD, thus making PVD available for new cycles of iron uptake. This chain is Pyoverdine export ATP-binding/permease protein PvdT, found in Pseudomonas entomophila (strain L48).